The primary structure comprises 84 residues: Small nuclear ribonucleoprotein E (84 aa).

Residues 13-84 (INFIFKLLQQ…GDNITLIQAI (72 aa)) form the Sm domain.

This sequence belongs to the snRNP Sm proteins family. Component of the Sm core complex, present in spliceosomal snRNP U1, U2, U4/U6 and U5. The core complex contains smb1, smd1, smd2, smd3, sme1, smf1 and smg1 (Sm proteins B, D1, D2, D3, E, F and G, respectively), and is probably a heptameric ring structure.

It is found in the cytoplasm. Its subcellular location is the nucleus. Its function is as follows. Involved in pre-mRNA splicing. Binds and is required for the stability of snRNA U1, U2, U4 and U5 which contain a highly conserved structural motif called the Sm binding site. Involved in cap modification. In Schizosaccharomyces pombe (strain 972 / ATCC 24843) (Fission yeast), this protein is Small nuclear ribonucleoprotein E.